Reading from the N-terminus, the 195-residue chain is dITP/XTP pyrophosphatase (195 aa).

8–13 is a binding site for substrate; sequence TNNQGK. Positions 39 and 68 each coordinate Mg(2+). Catalysis depends on Asp68, which acts as the Proton acceptor. Substrate contacts are provided by residues Ser69, 149 to 152, Lys172, and 177 to 178; these read FGYD and HR.

This sequence belongs to the HAM1 NTPase family. In terms of assembly, homodimer. The cofactor is Mg(2+).

It catalyses the reaction XTP + H2O = XMP + diphosphate + H(+). The catalysed reaction is dITP + H2O = dIMP + diphosphate + H(+). The enzyme catalyses ITP + H2O = IMP + diphosphate + H(+). Pyrophosphatase that catalyzes the hydrolysis of nucleoside triphosphates to their monophosphate derivatives, with a high preference for the non-canonical purine nucleotides XTP (xanthosine triphosphate), dITP (deoxyinosine triphosphate) and ITP. Seems to function as a house-cleaning enzyme that removes non-canonical purine nucleotides from the nucleotide pool, thus preventing their incorporation into DNA/RNA and avoiding chromosomal lesions. The chain is dITP/XTP pyrophosphatase from Staphylococcus epidermidis (strain ATCC 35984 / DSM 28319 / BCRC 17069 / CCUG 31568 / BM 3577 / RP62A).